A 308-amino-acid chain; its full sequence is Peptidyl-prolyl cis-trans isomerase CYP8 (308 aa).

A PPIase cyclophilin-type domain is found at 56–215 (FTDPESSEEA…QPITIGYISS (160 aa)).

It catalyses the reaction [protein]-peptidylproline (omega=180) = [protein]-peptidylproline (omega=0). PPIases accelerate the folding of proteins. It catalyzes the cis-trans isomerization of proline imidic peptide bonds in oligopeptides. The protein is Peptidyl-prolyl cis-trans isomerase CYP8 (CPR8) of Saccharomyces cerevisiae (strain ATCC 204508 / S288c) (Baker's yeast).